The sequence spans 181 residues: Peptidyl-tRNA hydrolase (181 aa).

Tyr-14 contributes to the tRNA binding site. Catalysis depends on His-19, which acts as the Proton acceptor. Residues Tyr-62, Asn-64, and Asn-108 each contribute to the tRNA site.

The protein belongs to the PTH family. In terms of assembly, monomer.

It localises to the cytoplasm. It catalyses the reaction an N-acyl-L-alpha-aminoacyl-tRNA + H2O = an N-acyl-L-amino acid + a tRNA + H(+). In terms of biological role, hydrolyzes ribosome-free peptidyl-tRNAs (with 1 or more amino acids incorporated), which drop off the ribosome during protein synthesis, or as a result of ribosome stalling. Its function is as follows. Catalyzes the release of premature peptidyl moieties from peptidyl-tRNA molecules trapped in stalled 50S ribosomal subunits, and thus maintains levels of free tRNAs and 50S ribosomes. This is Peptidyl-tRNA hydrolase from Campylobacter jejuni subsp. jejuni serotype O:2 (strain ATCC 700819 / NCTC 11168).